The sequence spans 123 residues: Small ribosomal subunit protein uS12c (123 aa).

Over residues 1–16 the composition is skewed to polar residues; that stretch reads MPTIQQLIRNSRQPAE. The disordered stretch occupies residues 1 to 23; it reads MPTIQQLIRNSRQPAENRTKSPA.

It belongs to the universal ribosomal protein uS12 family. Part of the 30S ribosomal subunit.

The protein resides in the plastid. It localises to the chloroplast. With S4 and S5 plays an important role in translational accuracy. Located at the interface of the 30S and 50S subunits. In Staurastrum punctulatum (Green alga), this protein is Small ribosomal subunit protein uS12c (rps12).